Consider the following 678-residue polypeptide: Translation initiation factor eIF2B subunit epsilon (678 aa).

Thr-172 carries the phosphothreonine modification. A disordered region spans residues 467-489 (STNELHLSDSESSETSSSSEEDM). Ser-500 is subject to Phosphoserine. At Thr-503 the chain carries Phosphothreonine. Ser-506 is modified (phosphoserine). A W2 domain is found at 508 to 674 (DFDEGDFNKE…NTAESESESE (167 aa)).

The protein belongs to the eIF-2B gamma/epsilon subunits family. Component of the translation initiation factor 2B (eIF2B) complex which is a heterodecamer of two sets of five different subunits: alpha, beta, gamma, delta and epsilon. Subunits alpha, beta and delta comprise a regulatory subcomplex and subunits epsilon and gamma comprise a catalytic subcomplex. Within the complex, the hexameric regulatory complex resides at the center, with the two heterodimeric catalytic subcomplexes bound on opposite sides.

Its subcellular location is the cytoplasm. It is found in the cytosol. Functionally, acts as a component of the translation initiation factor 2B (eIF2B) complex, which catalyzes the exchange of GDP for GTP on the eukaryotic initiation factor 2 (eIF2) complex gamma subunit. Its guanine nucleotide exchange factor activity is repressed when bound to eIF2 complex phosphorylated on the alpha subunit, thereby limiting the amount of methionyl-initiator methionine tRNA available to the ribosome and consequently global translation is repressed. This Schizosaccharomyces pombe (strain 972 / ATCC 24843) (Fission yeast) protein is Translation initiation factor eIF2B subunit epsilon (tif225).